A 532-amino-acid chain; its full sequence is Amidophosphoribosyltransferase 3, chloroplastic (532 aa).

The transit peptide at 1-59 (MAFSVEEISSILPNSLSANPRNVSQNTISPSFFKPSLKPYASKTLISLSCRRSLSPVFS) directs the protein to the chloroplast. The active-site Nucleophile is Cys77. The region spanning 77-296 (CGVVGIHGDP…PGEIVVVDRN (220 aa)) is the Glutamine amidotransferase type-2 domain. Residues Cys313, Cys459, Cys511, and Cys514 each contribute to the [4Fe-4S] cluster site.

In the C-terminal section; belongs to the purine/pyrimidine phosphoribosyltransferase family. [4Fe-4S] cluster is required as a cofactor. It depends on Mg(2+) as a cofactor. In terms of tissue distribution, mostly expressed at low levels in leaves, and, to a lower extent, in cotyledons.

The protein localises to the plastid. Its subcellular location is the chloroplast stroma. The enzyme catalyses 5-phospho-beta-D-ribosylamine + L-glutamate + diphosphate = 5-phospho-alpha-D-ribose 1-diphosphate + L-glutamine + H2O. It participates in purine metabolism; IMP biosynthesis via de novo pathway; N(1)-(5-phospho-D-ribosyl)glycinamide from 5-phospho-alpha-D-ribose 1-diphosphate: step 1/2. Its activity is regulated as follows. Inhibited by the phenyltriazole acetic acid compound [5-(4-chlorophenyl)-1-isopropyl-1H-[1,2,4]triazol-3-yl]-acetic acid (DAS734), a bleaching herbicide. Repressed by AMP, ADP, ATP and GTP, and slightly by GMP. Its function is as follows. Catalyzes the first committed step of 'de novo' purine biosynthesis from glutamine. This chain is Amidophosphoribosyltransferase 3, chloroplastic (ASE3), found in Arabidopsis thaliana (Mouse-ear cress).